The following is a 377-amino-acid chain: Pulmonary surfactant-associated protein B (377 aa).

A signal peptide spans 1–22 (MAKSHLLQWLLLLPTLCCPGAA). A propeptide spanning residues 23 to 191 (ITSASSLECA…PHTQDFSEQQ (169 aa)) is cleaved from the precursor. Residues 24–64 (TSASSLECAQGPQFWCQSLEHAVQCRALGHCLQEVWGHAGA) enclose the Saposin A-type domain. Saposin B-type domains lie at 64–146 (ANDL…PRGQ), 195–272 (PLPF…STED), and 291–366 (QDTE…EAPA). Intrachain disulfides connect C68–C142, C71–C136, C99–C111, C199–C268, C202–C262, C226–C237, C295–C362, C298–C356, and C321–C331. Residues 271–377 (EDAMGPALPA…PLQCFQTPHL (107 aa)) constitute a propeptide that is removed on maturation. An N-linked (GlcNAc...) asparagine glycan is attached at N307.

Homodimer; disulfide-linked.

The protein resides in the secreted. Its subcellular location is the extracellular space. It is found in the surface film. Pulmonary surfactant-associated proteins promote alveolar stability by lowering the surface tension at the air-liquid interface in the peripheral air spaces. SP-B increases the collapse pressure of palmitic acid to nearly 70 millinewtons per meter. The chain is Pulmonary surfactant-associated protein B (Sftpb) from Mus musculus (Mouse).